The chain runs to 204 residues: Ciliary microtubule inner protein 7 (204 aa).

It is found in the cell projection. It localises to the cilium. The chain is Ciliary microtubule inner protein 7 from Homo sapiens (Human).